The following is a 112-amino-acid chain: uncharacterized protein (112 aa).

The signal sequence occupies residues 1–21 (MKTLFTSVVLCGALVVSSSFA). 2 HhH domains span residues 49 to 79 (DKLN…IVQY) and 80 to 109 (REKH…NRDR).

This is an uncharacterized protein from Haemophilus influenzae (strain ATCC 51907 / DSM 11121 / KW20 / Rd).